The primary structure comprises 310 residues: Oxygen-dependent coproporphyrinogen-III oxidase (310 aa).

Serine 92 provides a ligand contact to substrate. A divalent metal cation-binding residues include histidine 96 and histidine 106. Catalysis depends on histidine 106, which acts as the Proton donor. Residue 108–110 (NVR) participates in substrate binding. Residues histidine 145 and histidine 175 each contribute to the a divalent metal cation site. The interval 240–275 (YVEFNLIWDRGTLFGLQSGGRTESILMSMPPLARWE) is important for dimerization. 258–260 (GGR) contacts substrate.

Belongs to the aerobic coproporphyrinogen-III oxidase family. As to quaternary structure, homodimer. The cofactor is a divalent metal cation.

It localises to the cytoplasm. It carries out the reaction coproporphyrinogen III + O2 + 2 H(+) = protoporphyrinogen IX + 2 CO2 + 2 H2O. It functions in the pathway porphyrin-containing compound metabolism; protoporphyrin-IX biosynthesis; protoporphyrinogen-IX from coproporphyrinogen-III (O2 route): step 1/1. Functionally, involved in the heme biosynthesis. Catalyzes the aerobic oxidative decarboxylation of propionate groups of rings A and B of coproporphyrinogen-III to yield the vinyl groups in protoporphyrinogen-IX. The protein is Oxygen-dependent coproporphyrinogen-III oxidase of Pectobacterium carotovorum subsp. carotovorum (strain PC1).